Here is a 93-residue protein sequence, read N- to C-terminus: MADITDIKSIIYTEKSLGLQEEGYVVIQTSEKMTKNQLKAVLKEYFGVTPVKINSLRMKGKTKRFRGVEGKRDNYKKFYVKLPEGASIESLAV.

Belongs to the universal ribosomal protein uL23 family. Part of the 50S ribosomal subunit. Contacts protein L29, and trigger factor when it is bound to the ribosome.

One of the early assembly proteins it binds 23S rRNA. One of the proteins that surrounds the polypeptide exit tunnel on the outside of the ribosome. Forms the main docking site for trigger factor binding to the ribosome. The polypeptide is Large ribosomal subunit protein uL23 (Nitratiruptor sp. (strain SB155-2)).